The primary structure comprises 682 residues: Penicillin-binding protein activator LpoA (682 aa).

The first 26 residues, 1 to 26 (MLSSITVRTKSGRLIPLVLAATLLAA), serve as a signal peptide directing secretion. Residue cysteine 27 is the site of N-palmitoyl cysteine attachment. Residue cysteine 27 is the site of S-diacylglycerol cysteine attachment.

It belongs to the LpoA family. In terms of assembly, interacts with PBP1a.

The protein resides in the cell outer membrane. Its function is as follows. Regulator of peptidoglycan synthesis that is essential for the function of penicillin-binding protein 1A (PBP1a). This is Penicillin-binding protein activator LpoA from Edwardsiella ictaluri (strain 93-146).